We begin with the raw amino-acid sequence, 1385 residues long: DNA-directed RNA polymerase subunit beta'' (1385 aa).

Residues C224, C294, C301, and C304 each coordinate Zn(2+).

Belongs to the RNA polymerase beta' chain family. RpoC2 subfamily. In plastids the minimal PEP RNA polymerase catalytic core is composed of four subunits: alpha, beta, beta', and beta''. When a (nuclear-encoded) sigma factor is associated with the core the holoenzyme is formed, which can initiate transcription. Zn(2+) is required as a cofactor.

The protein resides in the plastid. The protein localises to the chloroplast. It catalyses the reaction RNA(n) + a ribonucleoside 5'-triphosphate = RNA(n+1) + diphosphate. Functionally, DNA-dependent RNA polymerase catalyzes the transcription of DNA into RNA using the four ribonucleoside triphosphates as substrates. The chain is DNA-directed RNA polymerase subunit beta'' from Illicium oligandrum (Star anise).